Reading from the N-terminus, the 195-residue chain is dCTP deaminase (195 aa).

DCTP is bound by residues Arg110–Arg115, Asp128, Val136–Glu138, Tyr171, Lys178, and Gln182. Glu138 serves as the catalytic Proton donor/acceptor.

Belongs to the dCTP deaminase family. As to quaternary structure, homotrimer.

The enzyme catalyses dCTP + H2O + H(+) = dUTP + NH4(+). The protein operates within pyrimidine metabolism; dUMP biosynthesis; dUMP from dCTP (dUTP route): step 1/2. Its function is as follows. Catalyzes the deamination of dCTP to dUTP. The chain is dCTP deaminase from Idiomarina loihiensis (strain ATCC BAA-735 / DSM 15497 / L2-TR).